A 701-amino-acid polypeptide reads, in one-letter code: Elongation factor G (701 aa).

In terms of domain architecture, tr-type G spans 8–290 (SRYRNIGISA…AVIEYLPAPT (283 aa)). GTP is bound by residues 17–24 (AHIDAGKT), 88–92 (DTPGH), and 142–145 (NKMD).

The protein belongs to the TRAFAC class translation factor GTPase superfamily. Classic translation factor GTPase family. EF-G/EF-2 subfamily.

It localises to the cytoplasm. Functionally, catalyzes the GTP-dependent ribosomal translocation step during translation elongation. During this step, the ribosome changes from the pre-translocational (PRE) to the post-translocational (POST) state as the newly formed A-site-bound peptidyl-tRNA and P-site-bound deacylated tRNA move to the P and E sites, respectively. Catalyzes the coordinated movement of the two tRNA molecules, the mRNA and conformational changes in the ribosome. The sequence is that of Elongation factor G from Actinobacillus pleuropneumoniae serotype 5b (strain L20).